The chain runs to 397 residues: Ubiquitin-like modifier-activating enzyme 5 (397 aa).

The ATP site is built by G77, D98, K121, N144, and N178. The Zn(2+) site is built by C220 and C223. C244 (glycyl thioester intermediate) is an active-site residue. The Zn(2+) site is built by C297 and C302.

It belongs to the ubiquitin-activating E1 family. UBA5 subfamily.

Functionally, E1-like enzyme which activates UFM1. This chain is Ubiquitin-like modifier-activating enzyme 5, found in Culex quinquefasciatus (Southern house mosquito).